A 150-amino-acid polypeptide reads, in one-letter code: Large ribosomal subunit protein bL9 (150 aa).

Belongs to the bacterial ribosomal protein bL9 family.

In terms of biological role, binds to the 23S rRNA. This is Large ribosomal subunit protein bL9 from Shewanella pealeana (strain ATCC 700345 / ANG-SQ1).